Reading from the N-terminus, the 1427-residue chain is Protein expanded (1427 aa).

The region spanning R26–A399 is the FERM domain. A disordered region spans residues G176–K212. Residues E192–P211 are compositionally biased toward polar residues. Phosphotyrosine occurs at positions 227 and 423. 2 disordered regions span residues V520 to Q566 and N611 to Y656. Over residues D524 to G544 the composition is skewed to polar residues. The span at T545–S559 shows a compositional bias: low complexity. Phosphotyrosine is present on Y679. The span at E688–S710 shows a compositional bias: basic and acidic residues. 5 disordered regions span residues E688 to H732, Y766 to R792, A815 to S880, H939 to S963, and L1000 to L1022. Phosphotyrosine is present on Y766. The segment covering P818–A838 has biased composition (pro residues). The RXPPXY motif signature appears at R842–Y847. Positions S848–I859 are enriched in polar residues. Positions S860–S877 are enriched in low complexity. Positions L951–S963 are enriched in basic residues. Pro residues predominate over residues A1001–H1019. An SH3-binding motif is present at residues P1008–P1020. Phosphotyrosine is present on Y1103. Residues P1149–P1157 carry the SH3-binding motif. Residue S1181 is modified to Phosphoserine. Disordered regions lie at residues D1190–E1267 and T1345–Q1398. 2 stretches are compositionally biased toward pro residues: residues P1214 to P1230 and P1237 to L1246. Polar residues-rich tracts occupy residues S1253 to A1262 and T1345 to G1370. A compositionally biased stretch (basic residues) spans K1376–P1388.

Forms a complex with Kibra and Mer. Interacts (via RXPPXY motif) with Kibra (via domain WW 1). Interacts with Mer and Hpo (via SARAH domain). Interacts with Schip1; the interaction results in recruitment of Schip1 to the apical cell membrane. Interacts with ack and yki. In terms of processing, phosphorylated by Ack at several tyrosines including Tyr-227, Tyr-423, Tyr-679, Tyr-766 and Tyr-1103.

The protein localises to the apical cell membrane. Functionally, activates the Hippo/SWH (Sav/Wts/Hpo) signaling pathway, a signaling pathway that plays a pivotal role in organ size control and tumor suppression by restricting proliferation and promoting apoptosis. The core of this pathway is composed of a kinase cascade wherein Hippo (Hpo), in complex with its regulatory protein Salvador (Sav), phosphorylates and activates Warts (Wts) in complex with its regulatory protein Mats, which in turn phosphorylates and inactivates the Yorkie (Yki) oncoprotein. Ex acts synergistically along with Mer and Kibra to regulate the Hippo signaling pathway. Involved in the control of cell proliferation in imaginal disks. May bind to certain proteins of signal transduction pathways by interaction with their SH3 domains. Required for apical localization of Schip1. The protein is Protein expanded (ex) of Drosophila melanogaster (Fruit fly).